Reading from the N-terminus, the 406-residue chain is Arginine biosynthesis bifunctional protein ArgJ (406 aa).

Residues T156, K182, T193, E279, N401, and T406 each contribute to the substrate site. The active-site Nucleophile is the T193.

Belongs to the ArgJ family. Heterotetramer of two alpha and two beta chains.

The protein localises to the cytoplasm. It catalyses the reaction N(2)-acetyl-L-ornithine + L-glutamate = N-acetyl-L-glutamate + L-ornithine. It carries out the reaction L-glutamate + acetyl-CoA = N-acetyl-L-glutamate + CoA + H(+). It participates in amino-acid biosynthesis; L-arginine biosynthesis; L-ornithine and N-acetyl-L-glutamate from L-glutamate and N(2)-acetyl-L-ornithine (cyclic): step 1/1. The protein operates within amino-acid biosynthesis; L-arginine biosynthesis; N(2)-acetyl-L-ornithine from L-glutamate: step 1/4. Its function is as follows. Catalyzes two activities which are involved in the cyclic version of arginine biosynthesis: the synthesis of N-acetylglutamate from glutamate and acetyl-CoA as the acetyl donor, and of ornithine by transacetylation between N(2)-acetylornithine and glutamate. The polypeptide is Arginine biosynthesis bifunctional protein ArgJ (Bacillus licheniformis (strain ATCC 14580 / DSM 13 / JCM 2505 / CCUG 7422 / NBRC 12200 / NCIMB 9375 / NCTC 10341 / NRRL NRS-1264 / Gibson 46)).